Reading from the N-terminus, the 571-residue chain is FAD-linked oxidoreductase patO (571 aa).

The N-terminal stretch at 1–23 is a signal peptide; it reads MRLHQSPPRLLVCILSVLQVSAG. N-linked (GlcNAc...) asparagine glycans are attached at residues Asn-47, Asn-101, Asn-125, Asn-179, Asn-341, Asn-374, Asn-380, Asn-421, Asn-445, and Asn-480. Residues 115–294 form the FAD-binding PCMH-type domain; it reads TLGAMVRYAV…YAVTVKTFPD (180 aa).

It belongs to the oxygen-dependent FAD-linked oxidoreductase family. The cofactor is FAD.

The protein localises to the vacuole lumen. It functions in the pathway mycotoxin biosynthesis; patulin biosynthesis. In terms of biological role, FAD-linked oxidoreductase; part of the gene cluster that mediates the biosynthesis of patulin, an acetate-derived tetraketide mycotoxin produced by several fungal species that shows antimicrobial properties against several bacteria. PatO acts with patJ in the vacuole to convert gentisyl alcohol to isoepoxydon. The pathway begins with the synthesis of 6-methylsalicylic acid by the polyketide synthase (PKS) patK via condensation of acetate and malonate units. The 6-methylsalicylic acid decarboxylase patG then catalyzes the decarboxylation of 6-methylsalicylic acid to yield m-cresol (also known as 3-methylphenol). These first reactions occur in the cytosol. The intermediate m-cresol is then transported into the endoplasmic reticulum where the cytochrome P450 monooxygenase patH converts it to m-hydroxybenzyl alcohol, which is further converted to gentisyl alcohol by the cytochrome P450 monooxygenase patI. The oxidoreductases patJ and patO further convert gentisyl alcohol to isoepoxydon in the vacuole. PatN catalyzes then the transformation of isoepoxydon into phyllostine. The cluster protein patF is responsible for the conversion from phyllostine to neopatulin whereas the alcohol dehydrogenase patD converts neopatulin to E-ascladiol. The steps between isoepoxydon and E-ascladiol occur in the cytosol, and E-ascladiol is probably secreted to the extracellular space by one of the cluster-specific transporters patC or patM. Finally, the secreted patulin synthase patE catalyzes the conversion of E-ascladiol to patulin. The polypeptide is FAD-linked oxidoreductase patO (Penicillium expansum (Blue mold rot fungus)).